The following is a 264-amino-acid chain: Stage IV sporulation protein FA (264 aa).

A compositionally biased stretch (basic and acidic residues) spans 1-10 (MSHRADEIRK). The disordered stretch occupies residues 1-37 (MSHRADEIRKRLEKRRKQLSGSKRFSTQTVSEKQKPP). Residues 1–72 (MSHRADEIRK…GKHPLVKTDS (72 aa)) lie on the Mother cell cytoplasmic side of the membrane. Residues 19-31 (LSGSKRFSTQTVS) are compositionally biased toward polar residues. The helical transmembrane segment at 73–90 (IILKCLLSACLVLVSAIA) threads the bilayer. At 91–264 (YKTNIGPVSQ…IDPIQVISFE (174 aa)) the chain is on the forespore intermembrane space side.

As to quaternary structure, forms a complex with BofA and SpoIVFB localized in the mother-cell membrane surrounding the forespore. Post-translationally, may be degraded by FtsH. It is stabilized by an ftsH disruption mutant, and in a probably independent fashion, by overexpression of BofA.

Its subcellular location is the forespore outer membrane. In terms of biological role, implicated in the coupling of mother cell to forespore gene expression. Required for spore formation at 37 degrees Celsius, but not at 30 degrees Celsius. SpoIVFA plays a central role in both maintaining the SpoIVFA/BofA/SpoIVFB complex and anchoring it to the outer forespore membrane. SpoIVFA brings BofA into close proximity to SpoIVFB, allowing BofA to inhibit SpoIVFB. Increased accumulation of SpoIVFA seems to inhibit the activity of SpoIVFB and thus regulates the activation of sigma-K. This Bacillus subtilis (strain 168) protein is Stage IV sporulation protein FA (spoIVFA).